The following is a 374-amino-acid chain: S-adenosylmethionine:tRNA ribosyltransferase-isomerase (374 aa).

The protein belongs to the QueA family.

Its subcellular location is the cytoplasm. It carries out the reaction 7-aminomethyl-7-carbaguanosine(34) in tRNA + S-adenosyl-L-methionine = epoxyqueuosine(34) in tRNA + adenine + L-methionine + 2 H(+). It participates in tRNA modification; tRNA-queuosine biosynthesis. Functionally, synthesizes oQ from preQ1 in a single S-adenosylmethionine-requiring step. The ribosyl moiety of AdoMet is transferred and isomerized to the epoxycyclopentane residue of oQ. This is S-adenosylmethionine:tRNA ribosyltransferase-isomerase (queA) from Prochlorococcus marinus subsp. pastoris (strain CCMP1986 / NIES-2087 / MED4).